Reading from the N-terminus, the 154-residue chain is Cytochrome c-type biogenesis protein CcmE (154 aa).

Topologically, residues 1–7 (MKPRQKR) are cytoplasmic. Residues 8 to 28 (LVLIVGIVAAVGVAAALVLNA) form a helical; Signal-anchor for type II membrane protein membrane-spanning segment. Residues 29–154 (FQSNLVFFYS…GETVVKETRP (126 aa)) lie on the Periplasmic side of the membrane. His-121 and Tyr-125 together coordinate heme. A disordered region spans residues 131–154 (AEALQRAGASNQKLGETVVKETRP).

It belongs to the CcmE/CycJ family.

Its subcellular location is the cell inner membrane. Heme chaperone required for the biogenesis of c-type cytochromes. Transiently binds heme delivered by CcmC and transfers the heme to apo-cytochromes in a process facilitated by CcmF and CcmH. The chain is Cytochrome c-type biogenesis protein CcmE from Methylibium petroleiphilum (strain ATCC BAA-1232 / LMG 22953 / PM1).